We begin with the raw amino-acid sequence, 204 residues long: N-(5'-phosphoribosyl)anthranilate isomerase (204 aa).

Belongs to the TrpF family.

It carries out the reaction N-(5-phospho-beta-D-ribosyl)anthranilate = 1-(2-carboxyphenylamino)-1-deoxy-D-ribulose 5-phosphate. The protein operates within amino-acid biosynthesis; L-tryptophan biosynthesis; L-tryptophan from chorismate: step 3/5. The sequence is that of N-(5'-phosphoribosyl)anthranilate isomerase from Bacillus mycoides (strain KBAB4) (Bacillus weihenstephanensis).